The chain runs to 695 residues: Putative ATP-dependent DNA helicase R568 (695 aa).

A UvrD-like helicase ATP-binding domain is found at 86-499 (KFSEEQIKYI…FRNEEIFDSN (414 aa)). 107 to 114 (ACAGSGKT) lines the ATP pocket.

Belongs to the helicase family. UvrD subfamily.

It carries out the reaction Couples ATP hydrolysis with the unwinding of duplex DNA by translocating in the 3'-5' direction.. It catalyses the reaction ATP + H2O = ADP + phosphate + H(+). Functionally, ATP-dependent DNA helicase. The polypeptide is Putative ATP-dependent DNA helicase R568 (Acanthamoeba polyphaga mimivirus (APMV)).